The primary structure comprises 91 residues: Small ribosomal subunit protein uS7 (91 aa).

The protein belongs to the universal ribosomal protein uS7 family. In terms of assembly, part of the 30S ribosomal subunit. Contacts proteins S9 and S11.

One of the primary rRNA binding proteins, it binds directly to 16S rRNA where it nucleates assembly of the head domain of the 30S subunit. Is located at the subunit interface close to the decoding center, probably blocks exit of the E-site tRNA. This chain is Small ribosomal subunit protein uS7 (rpsG), found in Apple proliferation phytoplasma.